A 224-amino-acid polypeptide reads, in one-letter code: MSTAEQRLRLMQLASSNLPVGGYSWSQGLEWAVEAGWVPDVAAFERWQRRQMTEGFFTVDLPLFARLYRACEQGDIAAAQRWTAYLLACRETRELREEERNRGAAFARLLSDWQPDCPPPWRSLCQQSQLAGMAWLGVRWRIALPEMALSLGYSWIESAVMAGVKLVPFGQQAAQQLILRLCDHYAAEMPRALATPDGDIGSATPLAAIASARHETQYSRLFRS.

It belongs to the UreF family. In terms of assembly, ureD, UreF and UreG form a complex that acts as a GTP-hydrolysis-dependent molecular chaperone, activating the urease apoprotein by helping to assemble the nickel containing metallocenter of UreC. The UreE protein probably delivers the nickel.

The protein localises to the cytoplasm. Functionally, required for maturation of urease via the functional incorporation of the urease nickel metallocenter. In Klebsiella pneumoniae subsp. pneumoniae (strain ATCC 700721 / MGH 78578), this protein is Urease accessory protein UreF.